The sequence spans 836 residues: MDHNSPKSRRSRKPEPKPDIYSTFVVHSDSDSDQGRDRDKRKAKPEEDENVDLYATMVYKGDSDGEGEEDDDDDSMLPPLLKRLPKDFGGGASLDYDDDDGDESGDFGTMIVKTDRSSHSKKNSPYSSKPRMGVSPRRRARGGDEESSDEEDEEEDDDDDDGDYGTFVVKSKDKKGKKKDKEIDMTTMGRAVASMQKSNFGGKTRKLDPSSSSSKLHGEDNRKMQQQNSKMSTTSLPDSITREDPTTKYEFLNELGKGSYGSVYKARDLKTSEIVAVKVISLTEGEEGYEEIRGEIEMLQQCNHPNVVRYLGSYQGEDYLWIVMEYCGGGSVADLMNVTEEALEEYQIAYICREALKGLAYLHSIYKVHRDIKGGNILLTEQGEVKLGDFGVAAQLTRTMSKRNTFIGTPHWMAPEVIQENRYDGKVDVWALGVSAIEMAEGLPPRSSVHPMRVLFMISIEPAPMLEDKEKWSLVFHDFVAKCLTKEPRLRPTAAEMLKHKFVERCKTGASAMSPKIEKSRQIRATMALQAQSVVAPSLEDTSTLGPKSSEELGITVPSKPPQNSTEAPLTSTLNRQHITGNTVLAGEGGDFGTMIVHGEDETEESDSRSQLVREKESSSSQFEGVPREFPGEELPDSWIHDKKKPPAIDLPVEASISQSMQASSSHEHRTKLHNIAGTQMEGGSDASGSTLKNETVGRKAFALQDKLWSIYAAGNTVPIPFLRATDISPIALLSENMIGGMQQDGNGTVAVEALQELFTSSDPQSKKGRRGQNEMPLPPSVYQRLTTSSSLMNLAQVLAYHRACYEEMPLQELQATQEQQTIQNLCDTLRTILRL.

The segment covering 1-12 (MDHNSPKSRRSR) has biased composition (basic residues). Residues 1-244 (MDHNSPKSRR…SLPDSITRED (244 aa)) form a disordered region. Over residues 28-40 (SDSDSDQGRDRDK) the composition is skewed to basic and acidic residues. Composition is skewed to acidic residues over residues 64–75 (DGEGEEDDDDDS), 95–105 (DYDDDDGDESG), and 145–163 (EESSDEEDEEEDDDDDDGD). Polar residues predominate over residues 224–238 (MQQQNSKMSTTSLPD). The region spanning 249 to 503 (YEFLNELGKG…AAEMLKHKFV (255 aa)) is the Protein kinase domain. ATP is bound by residues 255–263 (LGKGSYGSV) and lysine 278. Aspartate 371 acts as the Proton acceptor in catalysis. 3 disordered regions span residues 539–571 (LEDTSTLGPKSSEELGITVPSKPPQNSTEAPLT), 600–640 (EDET…DSWI), and 760–780 (TSSDPQSKKGRRGQNEMPLPP). Residues 562 to 571 (PQNSTEAPLT) show a composition bias toward polar residues. Residues 606-618 (SDSRSQLVREKES) show a composition bias toward basic and acidic residues.

The protein belongs to the protein kinase superfamily. STE Ser/Thr protein kinase family. STE20 subfamily. As to quaternary structure, interacts with MOB1A and MOB1B via its N-terminal region at the plasma membrane and in the nucleus. Binds to BIK1 to phosphorylate and stabilize it. Interacts with and phosphorylates RBOHD upon flagellin perception to activate it. The cofactor is Mn(2+). Post-translationally, autophosphorylates. As to expression, mostly expressed in mature tissues of roots, shoots, hypocotyls, cotyledons, stems, leaves and flowers, as well as in the shoot apical meristem (SAM).

The protein localises to the cell membrane. It localises to the nucleus. Its subcellular location is the golgi apparatus. The protein resides in the trans-Golgi network. It is found in the early endosome. The enzyme catalyses L-seryl-[protein] + ATP = O-phospho-L-seryl-[protein] + ADP + H(+). The catalysed reaction is L-threonyl-[protein] + ATP = O-phospho-L-threonyl-[protein] + ADP + H(+). Functionally, serine/threonine-protein kinase. Regulates organ size in coordination with MOB1A by modulating cell proliferation and cell expansion, possibly by facilitating cell cycle exit. Positive regulator of the pathogen-associated molecular pattern (PAMP, e.g. flg22)-triggered immunity (PTI) signaling by stabilizing BIK1 and activating RBOHD by phosphorylation to promote the extracellular reactive oxygen species (ROS) burst involved in defense responses to bacterial infection. The chain is Serine/threonine-protein kinase 1 from Arabidopsis thaliana (Mouse-ear cress).